We begin with the raw amino-acid sequence, 95 residues long: Co-chaperonin GroES (95 aa).

This sequence belongs to the GroES chaperonin family. In terms of assembly, heptamer of 7 subunits arranged in a ring. Interacts with the chaperonin GroEL.

The protein resides in the cytoplasm. Together with the chaperonin GroEL, plays an essential role in assisting protein folding. The GroEL-GroES system forms a nano-cage that allows encapsulation of the non-native substrate proteins and provides a physical environment optimized to promote and accelerate protein folding. GroES binds to the apical surface of the GroEL ring, thereby capping the opening of the GroEL channel. In Chlorobium phaeobacteroides (strain BS1), this protein is Co-chaperonin GroES.